Consider the following 679-residue polypeptide: FAST kinase domain-containing protein 2, mitochondrial (679 aa).

Phosphoserine occurs at positions 113 and 126. Residues V607–K664 form the RAP domain.

This sequence belongs to the FAST kinase family. Monomer. Found in a complex with GRSF1, DDX28, DHX30 and FASTKD5. Associates with the 16S mitochondrial rRNA (16S mt-rRNA). Forms a regulatory protein-RNA complex, consisting of RCC1L, NGRN, RPUSD3, RPUSD4, TRUB2, FASTKD2 and 16S mt-rRNA.

Its subcellular location is the mitochondrion matrix. It is found in the mitochondrion nucleoid. Functionally, plays an important role in assembly of the mitochondrial large ribosomal subunit. As a component of a functional protein-RNA module, consisting of RCC1L, NGRN, RPUSD3, RPUSD4, TRUB2, FASTKD2 and 16S mitochondrial ribosomal RNA (16S mt-rRNA), controls 16S mt-rRNA abundance and is required for intra-mitochondrial translation. May play a role in mitochondrial apoptosis. The sequence is that of FAST kinase domain-containing protein 2, mitochondrial (Fastkd2) from Rattus norvegicus (Rat).